A 382-amino-acid polypeptide reads, in one-letter code: Chaperone protein DnaJ (382 aa).

One can recognise a J domain in the interval 5 to 70 (DYYDLLGLSK…DKRAAYDRYG (66 aa)). The CR-type zinc-finger motif lies at 138–216 (GTKVPINYVT…CSGSGRVRDE (79 aa)). Residues Cys-151, Cys-154, Cys-168, Cys-171, Cys-190, Cys-193, Cys-204, and Cys-207 each coordinate Zn(2+). CXXCXGXG motif repeat units lie at residues 151 to 158 (CSSCSGSG), 168 to 175 (CNTCHGAG), 190 to 197 (CHVCNGEG), and 204 to 211 (CKKCSGSG).

Belongs to the DnaJ family. Homodimer. Zn(2+) serves as cofactor.

It localises to the cytoplasm. Functionally, participates actively in the response to hyperosmotic and heat shock by preventing the aggregation of stress-denatured proteins and by disaggregating proteins, also in an autonomous, DnaK-independent fashion. Unfolded proteins bind initially to DnaJ; upon interaction with the DnaJ-bound protein, DnaK hydrolyzes its bound ATP, resulting in the formation of a stable complex. GrpE releases ADP from DnaK; ATP binding to DnaK triggers the release of the substrate protein, thus completing the reaction cycle. Several rounds of ATP-dependent interactions between DnaJ, DnaK and GrpE are required for fully efficient folding. Also involved, together with DnaK and GrpE, in the DNA replication of plasmids through activation of initiation proteins. This chain is Chaperone protein DnaJ, found in Ehrlichia ruminantium (strain Welgevonden).